Reading from the N-terminus, the 375-residue chain is Alcohol dehydrogenase 1C (375 aa).

An N-acetylserine modification is found at Ser-2. The residue at position 23 (Ser-23) is a Phosphoserine. Zn(2+) is bound by residues Cys-47, His-68, Cys-98, Cys-101, Cys-104, Cys-112, and Cys-175. NAD(+)-binding positions include 200–205, Asp-224, Lys-229, Ile-270, 293–295, 318–320, and Arg-370; these read GLGGVG, VGV, and AIF.

This sequence belongs to the zinc-containing alcohol dehydrogenase family. Dimer of identical or non-identical chains of class I alcohol dehydrogenase: ADH1A, ADH1B, and ADH1C. Requires Zn(2+) as cofactor.

It localises to the cytoplasm. The catalysed reaction is a primary alcohol + NAD(+) = an aldehyde + NADH + H(+). The enzyme catalyses ethanol + NAD(+) = acetaldehyde + NADH + H(+). Its function is as follows. Alcohol dehydrogenase. Exhibits high activity for ethanol oxidation and plays a major role in ethanol catabolism. The chain is Alcohol dehydrogenase 1C (ADH1C) from Homo sapiens (Human).